We begin with the raw amino-acid sequence, 1464 residues long: Nuclear pore complex protein NUP155 (1464 aa).

Ser-2 is modified (N-acetylserine).

The protein belongs to the non-repetitive/WGA-negative nucleoporin family. As to quaternary structure, part of the nuclear pore complex (NPC). The NPC has an eight-fold symmetrical structure comprising a central transport channel and two rings, the cytoplasmic and nuclear rings, to which eight filaments are attached. The cytoplasmic filaments have loose ends, while the nuclear filaments are joined in a distal ring, forming a nuclear basket. NPCs are highly dynamic in configuration and composition, and can be devided in 3 subcomplexes, the NUP62 subcomplex, the NUP107-160 subcomplex and the NUP93 subcomplex, containing approximately 30 different nucleoporin proteins.

It is found in the nucleus. The protein localises to the nuclear pore complex. Major component of the nuclear pore complex (NPC). This chain is Nuclear pore complex protein NUP155, found in Arabidopsis thaliana (Mouse-ear cress).